The following is a 359-amino-acid chain: MRKIIHIDMDCYFAAVEMRDFPEYRGKPLAVGGSRVQRGVISTCNYEARKFGVRSAMATGYALKLCPDLILVPGRMQVYKEVSQQIRAIFCRYTELIEPLSLDEAYLDVSDCKLFKGSATLIAEAIRRDILAETGLTASAGVAPIKFLAKVASDLNKPNGQCVIPPDEVAEFVKSLSLRKIPGVGKVTAEKLSSLGLNTCADVQAYPKQELIARFGKFGTVLVERAHGIDERGISVSRERKSVGVETTLAQDIYTLEQCQQVMPGLIQELSSRLGRSAKGRQIHKQVVKLKFNDFKQTTIEHRSDEVSVVMFYELLSQAMARQEGRGIRLLGVSVGLAESKDTLSPLMVRETKQLDFVF.

Positions 4 to 185 (IIHIDMDCYF…LSLRKIPGVG (182 aa)) constitute a UmuC domain. Residues Asp8 and Asp103 each coordinate Mg(2+). Glu104 is an active-site residue.

This sequence belongs to the DNA polymerase type-Y family. Monomer. It depends on Mg(2+) as a cofactor.

It is found in the cytoplasm. The enzyme catalyses DNA(n) + a 2'-deoxyribonucleoside 5'-triphosphate = DNA(n+1) + diphosphate. Functionally, poorly processive, error-prone DNA polymerase involved in untargeted mutagenesis. Copies undamaged DNA at stalled replication forks, which arise in vivo from mismatched or misaligned primer ends. These misaligned primers can be extended by PolIV. Exhibits no 3'-5' exonuclease (proofreading) activity. May be involved in translesional synthesis, in conjunction with the beta clamp from PolIII. The chain is DNA polymerase IV from Shewanella sp. (strain ANA-3).